A 192-amino-acid chain; its full sequence is Cytochrome b-245 light chain (192 aa).

The Cytoplasmic segment spans residues 2–7 (GQIEWA). The helical transmembrane segment at 8–30 (MWANEQALASGLILITGGIVATA) threads the bilayer. The Extracellular portion of the chain corresponds to 31–35 (GRFTQ). Residues 36–53 (WYFGAYSIVAGVLICLLE) traverse the membrane as a helical segment. Over 54–69 (YPRGKRKKGSTMERCG) the chain is Cytoplasmic. Residues 70–80 (QKYLTAVVKLF) lie within the membrane without spanning it. The Cytoplasmic segment spans residues 81-86 (GPLTRN). Residues 87–104 (YYVRAVLHLLLSVPAGFL) form a helical membrane-spanning segment. L105 is a topological domain (extracellular). Residues 106 to 126 (ATILGTVCLAIASVIYLLAAI) traverse the membrane as a helical segment. The Cytoplasmic segment spans residues 127–192 (RGEQWTPIEP…NPIPVTDEVV (66 aa)). The interval 134-192 (IEPKPKERPQVGGTIKQPPTNPPPRPPAEVRKKPSEAEEEAASAGGPQVNPIPVTDEVV) is disordered. At T147 the chain carries Phosphothreonine. K149 participates in a covalent cross-link: Glycyl lysine isopeptide (Lys-Gly) (interchain with G-Cter in ubiquitin). 2 positions are modified to phosphoserine: S168 and S176.

This sequence belongs to the p22phox family. As to quaternary structure, component of the phagocyte NADPH oxidase core complex/cytochrome b558 complex, composed of CYBB (heavy chain (beta)) and CYBA (light chain (alpha)). Component of the phagocyte NADPH oxidase complex composed of an obligatory core heterodimer formed by the membrane proteins CYBA and CYBB and the cytosolic regulatory subunits NCF1/p47-phox, NCF2/p67-phox, NCF4/p40-phox and the small GTPase RAC1 or RAC2. Interacts with NCF1 (via SH3 domain). Interacts with SH3PXD2A. Interacts with DUOX1, DUOX2 and TPO. Interacts with NOX4; this interaction mediates superoxide generation. Interacts with calprotectin (S100A8/9). Interacts with GBP7. Interacts with NOXO1. Forms a heterodimer with NOX3 and is essential for activity and cell membrane localization of NOX3. Interacts with NOX1. Post-translationally, phosphorylation at Thr-147 enhances NADPH oxidase activity by promoting NCF1/p47-phox binding. Ubiquitinated at Lys-149 likely by RNF145. Expressed to a relatively high level in kidney, spleen, thymus and lung, and to a lower level in aorta, adrenals, and heart. Expression is not detected in liver or brain.

Its subcellular location is the cell membrane. Its function is as follows. Subunit of NADPH oxidase complexes that is required for the NADPH oxidase activity that generates, in various cell types, superoxide from molecular oxygen utilizing NADPH as an electron donor. Subunit of the phagocyte NADPH oxidase complex that mediates the transfer of electrons from cytosolic NADPH to O2 to produce the superoxide anion (O2(-)). In the activated complex, electrons are first transferred from NADPH to flavin adenine dinucleotide (FAD) and subsequently transferred via two heme molecules to molecular oxygen, producing superoxide through an outer-sphere reaction. Activation of the NADPH oxidase complex is initiated by the assembly of cytosolic subunits of the NADPH oxidase complex with the core NADPH oxidase complex to form a complex at the plasma membrane or phagosomal membrane. This activation process is initiated by phosphorylation dependent binding of the cytosolic NCF1/p47-phox subunit to the C-terminus of CYBA/p22-phox. Aassociates with NOX3 to form a functional NADPH oxidase constitutively generating superoxide. This is Cytochrome b-245 light chain from Rattus norvegicus (Rat).